Reading from the N-terminus, the 520-residue chain is Aspartate-proton symporter (520 aa).

The next 14 helical transmembrane spans lie at 13-33 (LFDLILIGMGAIFGSAWLFAV), 49-69 (ILGGAIILLIGLVYAELGAAL), 85-105 (HLVGYLISFVTIVAYTSLISI), 130-150 (TISGWILQFALLCLFFLLNYW), 161-181 (IISIFKYIVPITIIIVLIFHF), 201-221 (AAISTGGVMFAYLGLHPIVSV), 232-252 (IPIALIICIIVSTIIYTVLQV), 281-301 (IAVMLGLGWLATLVILDAILS), 345-365 (WLSFALSIFWTLPFPSWNALV), 366-386 (NVCSVALILSYAIAPISSAAL), 402-422 (MSIIGPLSFIFTAFIVYWSGW), 425-445 (VSWLLGSQLVMFLIYLCFSKY), 460-480 (AWWLIGFYIMMLIFSYIGSFG), and 482-502 (GLGIISNPVDLILVAIGSLAI).

It belongs to the amino acid-polyamine-organocation (APC) superfamily. AGT (TC 2.A.3.11) family.

It is found in the cell membrane. Uptake of L-aspartate with the concomitant import of a proton. Can also transport aspartate hydroxamate and L-glutamate with lower affinity and efficiency. The sequence is that of Aspartate-proton symporter (yveA) from Bacillus subtilis (strain 168).